Here is a 503-residue protein sequence, read N- to C-terminus: Lysine--tRNA ligase (503 aa).

Mg(2+)-binding residues include Glu414 and Glu421.

The protein belongs to the class-II aminoacyl-tRNA synthetase family. In terms of assembly, homodimer. Requires Mg(2+) as cofactor.

It localises to the cytoplasm. It carries out the reaction tRNA(Lys) + L-lysine + ATP = L-lysyl-tRNA(Lys) + AMP + diphosphate. This chain is Lysine--tRNA ligase, found in Neisseria gonorrhoeae (strain NCCP11945).